Here is a 1064-residue protein sequence, read N- to C-terminus: Alpha-aminoadipic semialdehyde synthase (1064 aa).

Residues 24–445 are lysine-ketoglutarate reductase; that stretch reads VNKWERRTPL…RACISYRGEL (422 aa). T238 bears the Phosphothreonine mark. S458 carries the phosphoserine modification. The segment at 583-1064 is saccharopine dehydrogenase; sequence MTKKSGVLIL…YGIKLMEKAE (482 aa). L-saccharopine is bound by residues 703–704, D730, R830, and 852–854; these read SY and TLR. An NADP(+)-binding site is contributed by 729-731; the sequence is LDP.

It in the N-terminal section; belongs to the AlaDH/PNT family. In the C-terminal section; belongs to the saccharopine dehydrogenase family. In terms of assembly, homodimer. In terms of processing, phosphorylation of Ser-458 seems important for the LKR activity. In terms of tissue distribution, ubiquitous, with higher levels in flowers. Isoform Long is mostly present in young leaves, cotyledons, root tips and mature root parts. Whereas isoform Short is mostly expressed in cotyledons and at low levels in all root parts.

Its subcellular location is the cytoplasm. The enzyme catalyses L-saccharopine + NADP(+) + H2O = L-lysine + 2-oxoglutarate + NADPH + H(+). The catalysed reaction is L-saccharopine + NAD(+) + H2O = (S)-2-amino-6-oxohexanoate + L-glutamate + NADH + H(+). It functions in the pathway amino-acid degradation; L-lysine degradation via saccharopine pathway; glutaryl-CoA from L-lysine: step 1/6. Its pathway is amino-acid degradation; L-lysine degradation via saccharopine pathway; glutaryl-CoA from L-lysine: step 2/6. With respect to regulation, the LKR activity is stimulated by NaCl. Bifunctional enzyme that catalyzes the first two steps in lysine degradation. The N-terminal and the C-terminal contain lysine-oxoglutarate reductase and saccharopine dehydrogenase activity, respectively. Negatively regulates free Lys accumulation in seeds. The chain is Alpha-aminoadipic semialdehyde synthase (LKR/SDH) from Arabidopsis thaliana (Mouse-ear cress).